Consider the following 363-residue polypeptide: Chorismate synthase (363 aa).

Arg-47 is an NADP(+) binding site. Residues 124 to 126, Gly-286, 301 to 305, and Arg-327 contribute to the FMN site; these read RAS and KPTAT.

The protein belongs to the chorismate synthase family. Homotetramer. The cofactor is FMNH2.

The enzyme catalyses 5-O-(1-carboxyvinyl)-3-phosphoshikimate = chorismate + phosphate. The protein operates within metabolic intermediate biosynthesis; chorismate biosynthesis; chorismate from D-erythrose 4-phosphate and phosphoenolpyruvate: step 7/7. In terms of biological role, catalyzes the anti-1,4-elimination of the C-3 phosphate and the C-6 proR hydrogen from 5-enolpyruvylshikimate-3-phosphate (EPSP) to yield chorismate, which is the branch point compound that serves as the starting substrate for the three terminal pathways of aromatic amino acid biosynthesis. This reaction introduces a second double bond into the aromatic ring system. The chain is Chorismate synthase from Prochlorococcus marinus (strain MIT 9211).